Here is a 434-residue protein sequence, read N- to C-terminus: Alpha-enolase (434 aa).

Position 40 (Ser40) interacts with Mg(2+). The substrate site is built by His158 and Glu167. Residue Glu210 is the Proton donor of the active site. Asp245, Glu293, and Asp318 together coordinate Mg(2+). Substrate contacts are provided by Glu293 and Asp318. Catalysis depends on Lys343, which acts as the Proton acceptor. Substrate is bound by residues 370–373 (SHRS) and Lys394.

Belongs to the enolase family. In terms of assembly, homodimer. The cofactor is Mg(2+).

The protein localises to the cytoplasm. It carries out the reaction (2R)-2-phosphoglycerate = phosphoenolpyruvate + H2O. The protein operates within carbohydrate degradation; glycolysis; pyruvate from D-glyceraldehyde 3-phosphate: step 4/5. This is Alpha-enolase from Sceloporus undulatus (Eastern fence lizard).